A 246-amino-acid chain; its full sequence is Ubiquinone biosynthesis O-methyltransferase (246 aa).

Residues Arg44, Gly63, Asp84, and Met128 each coordinate S-adenosyl-L-methionine.

The protein belongs to the methyltransferase superfamily. UbiG/COQ3 family.

It catalyses the reaction a 3-demethylubiquinol + S-adenosyl-L-methionine = a ubiquinol + S-adenosyl-L-homocysteine + H(+). The enzyme catalyses a 3-(all-trans-polyprenyl)benzene-1,2-diol + S-adenosyl-L-methionine = a 2-methoxy-6-(all-trans-polyprenyl)phenol + S-adenosyl-L-homocysteine + H(+). The protein operates within cofactor biosynthesis; ubiquinone biosynthesis. O-methyltransferase that catalyzes the 2 O-methylation steps in the ubiquinone biosynthetic pathway. This chain is Ubiquinone biosynthesis O-methyltransferase, found in Xylella fastidiosa (strain Temecula1 / ATCC 700964).